A 181-amino-acid polypeptide reads, in one-letter code: Shikimate kinase (181 aa).

Gly11–Lys16 is a binding site for ATP. Ser15 contacts Mg(2+). Residues Asp33, Arg58, and Gly80 each coordinate substrate. Residue Arg128 participates in ATP binding. Arg144 contacts substrate.

It belongs to the shikimate kinase family. Monomer. The cofactor is Mg(2+).

The protein localises to the cytoplasm. The catalysed reaction is shikimate + ATP = 3-phosphoshikimate + ADP + H(+). It functions in the pathway metabolic intermediate biosynthesis; chorismate biosynthesis; chorismate from D-erythrose 4-phosphate and phosphoenolpyruvate: step 5/7. Functionally, catalyzes the specific phosphorylation of the 3-hydroxyl group of shikimic acid using ATP as a cosubstrate. The protein is Shikimate kinase of Leptospira biflexa serovar Patoc (strain Patoc 1 / Ames).